A 118-amino-acid polypeptide reads, in one-letter code: UPF0344 protein RBAM_010920 (118 aa).

4 helical membrane passes run 4 to 24, 33 to 53, 62 to 82, and 93 to 113; these read WHIT…GLYG, ITHM…AELF, EYAG…MLVI, and LWIG…HLPI.

The protein belongs to the UPF0344 family.

The protein localises to the cell membrane. The polypeptide is UPF0344 protein RBAM_010920 (Bacillus velezensis (strain DSM 23117 / BGSC 10A6 / LMG 26770 / FZB42) (Bacillus amyloliquefaciens subsp. plantarum)).